The chain runs to 132 residues: Nickel-responsive regulator (132 aa).

4 residues coordinate Ni(2+): His76, His87, His89, and Cys95.

It belongs to the transcriptional regulatory CopG/NikR family. As to quaternary structure, homotetramer. It depends on Ni(2+) as a cofactor.

Transcriptional repressor of the nikABCDE operon. Is active in the presence of excessive concentrations of intracellular nickel. The sequence is that of Nickel-responsive regulator from Klebsiella pneumoniae subsp. pneumoniae (strain ATCC 700721 / MGH 78578).